Reading from the N-terminus, the 86-residue chain is Small ribosomal subunit protein bS20 (86 aa).

The disordered stretch occupies residues 1–27 (MANSKSAKKRAIQAEKRRQHNASRRSM).

This sequence belongs to the bacterial ribosomal protein bS20 family.

Functionally, binds directly to 16S ribosomal RNA. The polypeptide is Small ribosomal subunit protein bS20 (Vibrio atlanticus (strain LGP32) (Vibrio splendidus (strain Mel32))).